The sequence spans 501 residues: L-arabinose isomerase (501 aa).

E306, E333, H350, and H450 together coordinate Mn(2+).

This sequence belongs to the arabinose isomerase family. Homohexamer. Mn(2+) serves as cofactor.

It catalyses the reaction beta-L-arabinopyranose = L-ribulose. It functions in the pathway carbohydrate degradation; L-arabinose degradation via L-ribulose; D-xylulose 5-phosphate from L-arabinose (bacterial route): step 1/3. In terms of biological role, catalyzes the conversion of L-arabinose to L-ribulose. This is L-arabinose isomerase from Pectobacterium carotovorum subsp. carotovorum (strain PC1).